Reading from the N-terminus, the 134-residue chain is ATP synthase epsilon chain, chloroplastic (134 aa).

Belongs to the ATPase epsilon chain family. In terms of assembly, F-type ATPases have 2 components, CF(1) - the catalytic core - and CF(0) - the membrane proton channel. CF(1) has five subunits: alpha(3), beta(3), gamma(1), delta(1), epsilon(1). CF(0) has three main subunits: a, b and c.

Its subcellular location is the plastid. The protein localises to the chloroplast thylakoid membrane. Functionally, produces ATP from ADP in the presence of a proton gradient across the membrane. This chain is ATP synthase epsilon chain, chloroplastic, found in Drimys granadensis.